Consider the following 1070-residue polypeptide: DNA-directed RNA polymerase subunit beta (1070 aa).

It belongs to the RNA polymerase beta chain family. As to quaternary structure, in plastids the minimal PEP RNA polymerase catalytic core is composed of four subunits: alpha, beta, beta', and beta''. When a (nuclear-encoded) sigma factor is associated with the core the holoenzyme is formed, which can initiate transcription.

The protein localises to the plastid. The protein resides in the chloroplast. It catalyses the reaction RNA(n) + a ribonucleoside 5'-triphosphate = RNA(n+1) + diphosphate. Functionally, DNA-dependent RNA polymerase catalyzes the transcription of DNA into RNA using the four ribonucleoside triphosphates as substrates. This Liriodendron tulipifera (Tuliptree) protein is DNA-directed RNA polymerase subunit beta.